Consider the following 644-residue polypeptide: ATP-dependent zinc metalloprotease FtsH (644 aa).

At 1 to 4 (MAKN) the chain is on the cytoplasmic side. The helical transmembrane segment at 5 to 25 (LILWLVIAVVLMSVFQSFGPS) threads the bilayer. Over 26–98 (ESNGRKVDYS…VGEPPEEPSL (73 aa)) the chain is Periplasmic. The helical transmembrane segment at 99–119 (LASIFISWFPMLLLIGVWIFF) threads the bilayer. Topologically, residues 120-644 (MRQMQGGGGK…NTMSEQLGDK (525 aa)) are cytoplasmic. 192–199 (GPPGTGKT) contributes to the ATP binding site. His414 lines the Zn(2+) pocket. Glu415 is a catalytic residue. His418 and Asp492 together coordinate Zn(2+). Residues 599–644 (RPPAGWEDPNGTNNSDSNGTPQAPRPVDEPRTPNPGNTMSEQLGDK) form a disordered region. Polar residues-rich tracts occupy residues 608 to 619 (NGTNNSDSNGTP) and 632 to 644 (NPGN…LGDK).

In the central section; belongs to the AAA ATPase family. The protein in the C-terminal section; belongs to the peptidase M41 family. Homohexamer. It depends on Zn(2+) as a cofactor.

The protein localises to the cell inner membrane. Its function is as follows. Acts as a processive, ATP-dependent zinc metallopeptidase for both cytoplasmic and membrane proteins. Plays a role in the quality control of integral membrane proteins. The sequence is that of ATP-dependent zinc metalloprotease FtsH from Salmonella typhi.